A 179-amino-acid chain; its full sequence is Inorganic pyrophosphatase (179 aa).

Lys-30, Arg-44, and Tyr-56 together coordinate substrate. Positions 66, 71, and 103 each coordinate Mg(2+). Tyr-142 contributes to the substrate binding site.

The protein belongs to the PPase family. As to quaternary structure, homohexamer. Mg(2+) serves as cofactor.

Its subcellular location is the cytoplasm. The enzyme catalyses diphosphate + H2O = 2 phosphate + H(+). Catalyzes the hydrolysis of inorganic pyrophosphate (PPi) forming two phosphate ions. The protein is Inorganic pyrophosphatase of Rhodospirillum rubrum (strain ATCC 11170 / ATH 1.1.1 / DSM 467 / LMG 4362 / NCIMB 8255 / S1).